The sequence spans 116 residues: Phosphoribosyl-ATP pyrophosphatase (116 aa).

It belongs to the PRA-PH family.

It localises to the cytoplasm. The enzyme catalyses 1-(5-phospho-beta-D-ribosyl)-ATP + H2O = 1-(5-phospho-beta-D-ribosyl)-5'-AMP + diphosphate + H(+). It functions in the pathway amino-acid biosynthesis; L-histidine biosynthesis; L-histidine from 5-phospho-alpha-D-ribose 1-diphosphate: step 2/9. The chain is Phosphoribosyl-ATP pyrophosphatase from Nitrobacter winogradskyi (strain ATCC 25391 / DSM 10237 / CIP 104748 / NCIMB 11846 / Nb-255).